Consider the following 681-residue polypeptide: Fibulin-1 (681 aa).

An N-terminal signal peptide occupies residues 1-17; the sequence is MDLYMIVLLSLCGLLRA. Cystine bridges form between C29–C55, C30–C62, C43–C63, C72–C103, C85–C104, C106–C125, C107–C138, C114–C139, C162–C171, C167–C176, C178–C191, C197–C210, C204–C219, C225–C237, C243–C256, C250–C265, C271–C283, C289–C301, C317–C330, C336–C348, C343–C357, C359–C372, C378–C390, C386–C399, C401–C414, C420–C429, C440–C454, C460–C473, C469–C482, C484–C498, C504–C517, C511–C526, and C531–C553. 3 consecutive Anaphylatoxin-like domains span residues 29-63, 68-107, and 108-139; these read CCED…EQCC, EDSI…CECC, and LLGS…RSCC. The region spanning 158-192 is the EGF-like 1 domain; it reads TEDQCRAAGCAQRCLNGTCSCLDGFKLKTDGKHCE. N173 carries N-linked (GlcNAc...) asparagine glycosylation. An EGF-like 2; calcium-binding domain is found at 193 to 238; the sequence is DINECLLGPHHCVTGERCINTLGSYRCQREISCGTGYELTDNNKCK. The 46-residue stretch at 239 to 284 folds into the EGF-like 3; calcium-binding domain; the sequence is DIDECDLGTHNCAAEMECQNTAGSFRCRPRMQCAAGFIQDALGSCI. Positions 285–331 constitute an EGF-like 4; calcium-binding domain; the sequence is DINECVSVTALSRGQMCFNTVGSFICQRHSVTCGRGYHLNAEGTRCV. The region spanning 332–373 is the EGF-like 5; calcium-binding domain; the sequence is DIDECAGPDNSCDGHGCINLVGSYRCECRTGFIFNSISRSCE. In terms of domain architecture, EGF-like 6; calcium-binding spans 374 to 415; it reads DIDECRNYPGRLCAHKCENILGSYKCSCTAGFKLADDGRNCD. Residues 416 to 455 enclose the EGF-like 7; calcium-binding domain; that stretch reads DVNECESSPCSQGCANVYGSYQSYCRRGYQLSDADGITCE. The EGF-like 8; calcium-binding domain occupies 456–499; it reads DIDECALPTGGHICSYRCHNTPGSFHCTCPASGYTLAANGRSCQ. One can recognise an EGF-like 9; calcium-binding domain in the interval 500–554; sequence DIDECLTGTHSCSESESCFNIQGGFRCLSFDCPANYRRSGDTRPRVDRADIIRCV.

This sequence belongs to the fibulin family. Homomultimerizes and interacts with various extracellular matrix components such as FN1, LAMA1, NID, AGC1 and CSPG2.

Its subcellular location is the secreted. The protein resides in the extracellular space. It is found in the extracellular matrix. Incorporated into fibronectin-containing matrix fibers. May play a role in cell adhesion and migration along protein fibers within the extracellular matrix (ECM). Could be important for certain developmental processes and contribute to the supramolecular organization of ECM architecture, in particular to those of basement membranes. The polypeptide is Fibulin-1 (fbln1) (Danio rerio (Zebrafish)).